The following is a 735-amino-acid chain: Dolichyl-diphosphooligosaccharide--protein glycosyltransferase subunit STT3B (735 aa).

Residues 1–38 (MGGKSEPAKSESMATKPDLLNTSFFSFKSLKLKTKQQE) lie on the Cytoplasmic side of the membrane. The helical transmembrane segment at 39 to 59 (LLLRISILGLVYILAFIARLF) threads the bilayer. At 60–142 (SVLRYESMIH…VHIREVCVLT (83 aa)) the chain is on the lumenal side. The DXD motif 1 motif lies at 70-72 (EFD). Asp-72 contributes to the Mn(2+) binding site. A helical membrane pass occupies residues 143–161 (APFFASNTTLVAYFFGKEL). Residues 162–163 (WD) lie on the Cytoplasmic side of the membrane. Residues 164–181 (TGAGLVAAVLIAICPGYI) traverse the membrane as a helical segment. At 182 to 192 (SRSVAGSYDNE) the chain is on the lumenal side. The Mn(2+) site is built by Asp-190 and Glu-192. The DXD motif 2 signature appears at 190 to 192 (DNE). Residues 193 to 212 (AVAIFALLLTFYLFVKAVNT) traverse the membrane as a helical segment. At 213–214 (GS) the chain is on the cytoplasmic side. A helical membrane pass occupies residues 215-229 (LAWALASAFGYFYMV). Topologically, residues 230 to 234 (SAWGG) are lumenal. Residues 235–251 (YVFIINLVPLYVLVLLI) traverse the membrane as a helical segment. The Cytoplasmic portion of the chain corresponds to 252–256 (TGRYS). A helical membrane pass occupies residues 257–282 (MRLYIAYNCMYILGMLLAMQIRFVGF). The Lumenal segment spans residues 283-290 (QHVQSGEH). Residues 291 to 310 (MGAMGVFLLMQVFYFLDWVK) form a helical membrane-spanning segment. The Cytoplasmic segment spans residues 311–326 (YQLNDTKLFQTFLRIT). The chain crosses the membrane as a helical span at residues 327–347 (VTSAILVGGVAVGVGTASGYI). Topologically, residues 348 to 380 (SPWTGRFYSLLDPTYAKDHIPIIASVSEHQPTA) are lumenal. The SVSE motif motif lies at 372 to 375 (SVSE). A helical membrane pass occupies residues 381–403 (WSSFMFDYHILLFLFPAGLYFCF). The Cytoplasmic segment spans residues 404-409 (KRLTDA). A helical membrane pass occupies residues 410–426 (TIFIVMYGLTSLYFAGV). At 427 to 430 (MVRL) the chain is on the lumenal side. Arg-429 is a binding site for dolichyl diphosphooligosaccharide. Residues 431-452 (ILVATPAVCLISAIAVSATIKN) form a helical membrane-spanning segment. Over 453-494 (LTSLLRTKQKVSQTGSTKGAGSSKASSKVTLDQSQPFQKNGA) the chain is Cytoplasmic. Residues 495–515 (IALLVGVFYLLSRYAIHCTWV) traverse the membrane as a helical segment. The Lumenal segment spans residues 516 to 735 (TAEAYSSPSI…YRVKPPTNRL (220 aa)). Residues 562 to 564 (WWD) are interacts with target acceptor peptide in protein substrate. A WWDYG motif motif is present at residues 562 to 566 (WWDYG). Position 567 (Tyr-567) interacts with dolichyl diphosphooligosaccharide. Asn-574 and Asn-581 each carry an N-linked (GlcNAc...) asparagine glycan. Residue Asn-585 is glycosylated (N-linked (GlcNAc...) (high mannose) asparagine). The short motif at 629–636 (DINKFLWM) is the DK motif element.

Belongs to the STT3 family. Component of the oligosaccharyltransferase (OST) complex. Mg(2+) serves as cofactor. The cofactor is Mn(2+). As to expression, expressed preferentially in the root but also in the shoot.

It is found in the endoplasmic reticulum membrane. The catalysed reaction is a di-trans,poly-cis-dolichyl diphosphooligosaccharide + L-asparaginyl-[protein] = N(4)-(oligosaccharide-(1-&gt;4)-N-acetyl-beta-D-glucosaminyl-(1-&gt;4)-N-acetyl-beta-D-glucosaminyl)-L-asparaginyl-[protein] + a di-trans,poly-cis-dolichyl diphosphate + H(+). Its pathway is protein modification; protein glycosylation. In terms of biological role, catalytic subunit of the oligosaccharyl transferase (OST) complex that catalyzes the initial transfer of a defined glycan (Glc(3)Man(9)GlcNAc(2) in eukaryotes) from the lipid carrier dolichol-pyrophosphate to an asparagine residue within an Asn-X-Ser/Thr consensus motif in nascent polypeptide chains, the first step in protein N-glycosylation. N-glycosylation occurs cotranslationally and the complex associates with the Sec61 complex at the channel-forming translocon complex that mediates protein translocation across the endoplasmic reticulum (ER). All subunits are required for a maximal enzyme activity. This subunit contains the active site and the acceptor peptide and donor lipid-linked oligosaccharide (LLO) binding pockets. This chain is Dolichyl-diphosphooligosaccharide--protein glycosyltransferase subunit STT3B (STT3B), found in Arabidopsis thaliana (Mouse-ear cress).